Reading from the N-terminus, the 333-residue chain is L-asparagine oxygenase (333 aa).

Residues glutamate 125 and asparagine 146 each coordinate L-asparagine. Histidine 155 and glutamate 157 together coordinate Fe cation. L-asparagine is bound by residues glutamate 157 and asparagine 158. A Fe cation-binding site is contributed by histidine 287. Residue arginine 301 coordinates 2-oxoglutarate. Residue arginine 305 coordinates L-asparagine.

The protein belongs to the clavaminate synthase family. Requires Fe(2+) as cofactor.

It catalyses the reaction L-asparagine + 2-oxoglutarate + O2 = (2S,3S)-3-hydroxyasparagine + succinate + CO2. It participates in antibiotic biosynthesis; calcium-dependent antibiotic biosynthesis. Catalyzes the 3-hydroxylation of L-asparagine to (2S,3S)-3-hydroxyasparagine. The 3-hydroxylated asparagine produced is incorporated at position 9 during the biosynthesis of the non-ribosomally synthesized calcium-dependent antibiotic (CDA), a 11-residue acidic lipopeptide lactone. Is able to hydroxylate only free L-asparagine, since it hydroxylates neither a CDA analog with unmodified Asn at position 9 nor a peptidyl-carrier-protein (PCP)-bound asparagine. Is not active toward D-asparagine. This is L-asparagine oxygenase (asnO) from Streptomyces coelicolor (strain ATCC BAA-471 / A3(2) / M145).